The sequence spans 277 residues: Collectin-10 (277 aa).

Positions Met-1–Gly-27 are cleaved as a signal peptide. N-linked (GlcNAc...) asparagine glycosylation occurs at Asn-11. Residues Thr-41–Lys-103 form a disordered region. The region spanning Ser-45–Lys-103 is the Collagen-like domain. A compositionally biased stretch (basic and acidic residues) spans Lys-49–Val-67. The C-type lectin domain occupies Thr-155–Glu-271. 2 disulfides stabilise this stretch: Cys-176-Cys-270 and Cys-248-Cys-262. Asn-258 carries an N-linked (GlcNAc...) asparagine glycan.

The protein belongs to the COLEC10/COLEC11 family. In terms of tissue distribution, expressed mainly in the liver and stomach, but also in muscles, testes, and intestines.

Its subcellular location is the secreted. It localises to the golgi apparatus. The protein localises to the cytoplasm. In terms of biological role, lectin that binds to various sugars: galactose &gt; mannose = fucose &gt; N-acetylglucosamine &gt; N-acetylgalactosamine. Acts as a chemoattractant, probably involved in the regulation of cell migration. This Mus musculus (Mouse) protein is Collectin-10 (Colec10).